A 97-amino-acid chain; its full sequence is UPF0235 protein Aasi_0294 (97 aa).

Belongs to the UPF0235 family.

In Amoebophilus asiaticus (strain 5a2), this protein is UPF0235 protein Aasi_0294.